Consider the following 482-residue polypeptide: Complement C1r subcomponent-like protein (482 aa).

The first 43 residues, 1–43, serve as a signal peptide directing secretion; it reads MSGFRGLVPELENSLWSSPTTSCMSKMCWWLLWGILHTCPTQA. The 123-residue stretch at 44–166 folds into the CUB domain; it reads SVLLAQQSPQ…KGFLALYQAV (123 aa). 2 disulfide bridges follow: C97-C115 and C190-C223. A Sushi domain is found at 166–225; it reads VAVNQPNGDTEAVTTPGAPKIQNHCQDPYYKADQTGTLSCPSSWKWKDRQDGGEVPECVP. The 240-residue stretch at 240–479 folds into the Peptidase S1 domain; sequence TFGSSRAKLG…YMDWIKRVIE (240 aa). Catalysis depends on charge relay system residues H278 and D334. N358 carries N-linked (GlcNAc...) asparagine glycosylation. Cystine bridges form between C397–C416 and C427–C457. S431 functions as the Charge relay system in the catalytic mechanism.

This sequence belongs to the peptidase S1 family. Expressed in liver (at protein level).

It localises to the secreted. Mediates the proteolytic cleavage of HP/haptoglobin in the endoplasmic reticulum. In Mus musculus (Mouse), this protein is Complement C1r subcomponent-like protein (C1rl).